Consider the following 295-residue polypeptide: Release factor glutamine methyltransferase (295 aa).

S-adenosyl-L-methionine contacts are provided by residues 127-131 (GTGSG), Asp-150, Phe-179, and Asn-195. 195 to 198 (NPPY) contacts substrate.

This sequence belongs to the protein N5-glutamine methyltransferase family. PrmC subfamily.

The catalysed reaction is L-glutaminyl-[peptide chain release factor] + S-adenosyl-L-methionine = N(5)-methyl-L-glutaminyl-[peptide chain release factor] + S-adenosyl-L-homocysteine + H(+). Functionally, methylates the class 1 translation termination release factors RF1/PrfA and RF2/PrfB on the glutamine residue of the universally conserved GGQ motif. This Nitratidesulfovibrio vulgaris (strain ATCC 29579 / DSM 644 / CCUG 34227 / NCIMB 8303 / VKM B-1760 / Hildenborough) (Desulfovibrio vulgaris) protein is Release factor glutamine methyltransferase.